The chain runs to 497 residues: Solute carrier family 2, facilitated glucose transporter member 6 (497 aa).

The Cytoplasmic segment spans residues 1 to 36; it reads MQEPLLRTEGLDYDTFPEVPATPGERERAGALKNRR. The Dileucine internalization motif motif lies at 5–6; that stretch reads LL. The helical transmembrane segment at 37 to 57 threads the bilayer; it reads VFLATFAAVLGNFSFGYALVY. The Extracellular segment spans residues 58–80; it reads TSPVIPELKLSSDPALHLDKIQA. The chain crosses the membrane as a helical span at residues 81 to 101; that stretch reads SWFGSVFTLGAAAGGLSAMLL. The Cytoplasmic portion of the chain corresponds to 102-115; the sequence is NDLLGRKLSIMFSA. The helical transmembrane segment at 116–136 threads the bilayer; it reads VPSAIGYAIMAGARGLWMLLL. Over 137 to 138 the chain is Extracellular; it reads GR. Residues 139–159 traverse the membrane as a helical segment; sequence MLTGFAGGLTAACIPVYVSEI. Topologically, residues 160-171 are cytoplasmic; the sequence is APPDVRGALGAT. The helical transmembrane segment at 172 to 192 threads the bilayer; that stretch reads PQLMAVFGSLSLYALGLLLPW. Q173 is a binding site for a D-hexose. Position 193 (R193) is a topological domain, extracellular. A helical transmembrane segment spans residues 194–214; that stretch reads WLAVAGEGPVLIMILLLSFMP. Residues 215-273 are Cytoplasmic-facing; sequence NSPRFLLSKSRDEEALQALTWLRADSEVHWEFEQIQDNVRRQSSRVSWAEAREPRVYRP. The chain crosses the membrane as a helical span at residues 274-294; it reads VLIAVLMRFLQQLTGITPILV. 284 to 285 contacts a D-hexose; the sequence is QQ. Over 295–312 the chain is Extracellular; that stretch reads YLQTIFDNTSVVLPSQQD. N302 carries N-linked (GlcNAc...) asparagine glycosylation. Residues 313–333 form a helical membrane-spanning segment; sequence AAIVGAVRLLSVLIAAVTMDL. Residues 334–337 are Cytoplasmic-facing; the sequence is AGRK. The helical transmembrane segment at 338-358 threads the bilayer; it reads VLLYVSASVMFAANLTLGLYV. At 359-385 the chain is on the extracellular side; the sequence is QFVPRPLTPNSTVEIVTLGDTAFNYLT. The N-linked (GlcNAc...) asparagine glycan is linked to N368. Residues 386–406 form a helical membrane-spanning segment; that stretch reads LIPLLATMLFIMGYAMGWGPI. Residues 407–425 are Cytoplasmic-facing; it reads TWLLMSEVLPLRARGVASG. W408 lines the a D-hexose pocket. Residues 426–446 traverse the membrane as a helical segment; that stretch reads LCVLVSWLTAFVLTNYFLLAV. N447 is a topological domain (extracellular). Residues 448–468 form a helical membrane-spanning segment; it reads AFGLQVPFFFFSAICLLSLLF. At 469 to 497 the chain is on the cytoplasmic side; it reads TGCCVPETRGRSLEQIEAFFHTRRMSFRP.

This sequence belongs to the major facilitator superfamily. Sugar transporter (TC 2.A.1.1) family. In terms of tissue distribution, mainly expressed in brain and spleen. Also expressed in lung, heart, muscle, liver, kidney, fat, whole blood, testes, ovaries and uterus.

It localises to the lysosome membrane. Its function is as follows. Probable sugar transporter that acts as a regulator of glycolysis in macrophages. Does not transport glucose. This is Solute carrier family 2, facilitated glucose transporter member 6 from Mus musculus (Mouse).